The sequence spans 566 residues: ALBINO3-like protein 3, mitochondrial (566 aa).

A mitochondrion-targeting transit peptide spans 1–44 (MAFRRVLLSHLRRSHHTCSSLSPHHVSATTQPSIALALFQSRFF). Transmembrane regions (helical) follow at residues 139-159 (WVVI…ILIL), 207-227 (LWVP…ITSI), 249-269 (LTEI…AGLH), and 301-321 (LLTC…LLYW). TPR repeat units follow at residues 386–419 (PKEL…DPEY), 420–453 (LQAM…LLDT), 465–498 (IVAS…KEPD), and 507–540 (LDAL…DPSF). The disordered stretch occupies residues 547 to 566 (CEEDDTIPTSSSSNSTSKTS). A compositionally biased stretch (low complexity) spans 555 to 566 (TSSSSNSTSKTS).

It belongs to the OXA1/ALB3/YidC (TC 2.A.9.2) family.

It is found in the mitochondrion inner membrane. Its function is as follows. Probably required for the insertion of integral membrane proteins into the mitochondrial inner membrane. The polypeptide is ALBINO3-like protein 3, mitochondrial (ALB3L3) (Arabidopsis thaliana (Mouse-ear cress)).